Consider the following 740-residue polypeptide: Isocitrate dehydrogenase [NADP] 2 (740 aa).

Residues Asn-83 and Ser-85 each contribute to the NADP(+) site. D-threo-isocitrate contacts are provided by Ser-130, Asn-133, Arg-137, Arg-143, and Lys-253. Residue Asn-133 participates in NADP(+) binding. Mg(2+) is bound at residue Asp-348. Tyr-418 and Arg-546 together coordinate D-threo-isocitrate. Mg(2+)-binding residues include Asp-547 and Asp-551. Positions 584, 588, 599, 601, and 648 each coordinate NADP(+).

It belongs to the monomeric-type IDH family. As to quaternary structure, monomer. It depends on Mg(2+) as a cofactor. Requires Mn(2+) as cofactor.

It catalyses the reaction D-threo-isocitrate + NADP(+) = 2-oxoglutarate + CO2 + NADPH. IDH activity is not significantly affected by monovalent cations. The combined addition of Mn(2+) and another divalent cation results in the decrease of the activity. Its function is as follows. Catalyzes the oxidative decarboxylation of isocitrate to 2-oxoglutarate and carbon dioxide with the concomitant reduction of NADP(+). Cannot use NAD(+). This is Isocitrate dehydrogenase [NADP] 2 from Psychrobacter sp. (strain 13A).